The chain runs to 392 residues: Mitochondrial distribution and morphology protein 10 (392 aa).

The protein belongs to the MDM10 family. In terms of assembly, component of the ER-mitochondria encounter structure (ERMES) or MDM complex, composed of MMM1, MDM10, MDM12 and MDM34. Associates with the mitochondrial outer membrane sorting assembly machinery SAM(core) complex.

The protein resides in the mitochondrion outer membrane. Component of the ERMES/MDM complex, which serves as a molecular tether to connect the endoplasmic reticulum and mitochondria. Components of this complex are involved in the control of mitochondrial shape and protein biogenesis and may function in phospholipid exchange. MDM10 is involved in the late assembly steps of the general translocase of the mitochondrial outer membrane (TOM complex). Functions in the TOM40-specific route of the assembly of outer membrane beta-barrel proteins, including the association of TOM40 with the receptor TOM22 and small TOM proteins. Can associate with the SAM(core) complex as well as the MDM12-MMM1 complex, both involved in late steps of the major beta-barrel assembly pathway, that is responsible for biogenesis of all outer membrane beta-barrel proteins. May act as a switch that shuttles between both complexes and channels precursor proteins into the TOM40-specific pathway. Plays a role in mitochondrial morphology and in the inheritance of mitochondria. The polypeptide is Mitochondrial distribution and morphology protein 10 (Phaeosphaeria nodorum (strain SN15 / ATCC MYA-4574 / FGSC 10173) (Glume blotch fungus)).